A 72-amino-acid polypeptide reads, in one-letter code: Translation initiation factor IF-1 2 (72 aa).

The 72-residue stretch at Met-1–Lys-72 folds into the S1-like domain.

This sequence belongs to the IF-1 family. In terms of assembly, component of the 30S ribosomal translation pre-initiation complex which assembles on the 30S ribosome in the order IF-2 and IF-3, IF-1 and N-formylmethionyl-tRNA(fMet); mRNA recruitment can occur at any time during PIC assembly.

It localises to the cytoplasm. Functionally, one of the essential components for the initiation of protein synthesis. Stabilizes the binding of IF-2 and IF-3 on the 30S subunit to which N-formylmethionyl-tRNA(fMet) subsequently binds. Helps modulate mRNA selection, yielding the 30S pre-initiation complex (PIC). Upon addition of the 50S ribosomal subunit IF-1, IF-2 and IF-3 are released leaving the mature 70S translation initiation complex. The sequence is that of Translation initiation factor IF-1 2 from Azoarcus sp. (strain BH72).